Consider the following 258-residue polypeptide: Mediator of RNA polymerase II transcription subunit 18 (258 aa).

The protein belongs to the Mediator complex subunit 18 family. As to quaternary structure, component of the Mediator complex.

It is found in the nucleus. In terms of biological role, component of the Mediator complex, a coactivator involved in the regulated transcription of nearly all RNA polymerase II-dependent genes. Mediator functions as a bridge to convey information from gene-specific regulatory proteins to the basal RNA polymerase II transcription machinery. Mediator is recruited to promoters by direct interactions with regulatory proteins and serves as a scaffold for the assembly of a functional preinitiation complex with RNA polymerase II and the general transcription factors. In Eremothecium gossypii (strain ATCC 10895 / CBS 109.51 / FGSC 9923 / NRRL Y-1056) (Yeast), this protein is Mediator of RNA polymerase II transcription subunit 18 (SRB5).